The sequence spans 79 residues: Hematopoietic cell signal transducer (79 aa).

Residues 1–18 (MVPPGNILFLLLLPVATA) form the signal peptide. The Extracellular portion of the chain corresponds to 19-35 (QMTPGSCSGCGPLSLPL). A helical membrane pass occupies residues 36-56 (LAGLVAADAVVSLLIVVVVFV). At 57-79 (CARLRSRPTQEDDKIYINMPGRG) the chain is on the cytoplasmic side. Phosphotyrosine is present on Tyr-72. The interval 72-74 (YIN) is GRB2 binding site. The tract at residues 72–75 (YINM) is PIK3R1 binding site.

It belongs to the DAP10 family. In terms of assembly, homodimer; Disulfide-linked. Heterohexamer composed of four subunits of HCST/DAP10 and two subunits of KLRK1. Interacts (via transmembrane domain) with KLRK1 (via transmembrane domain); the interaction is required for KLRK1 NK cell surface and induces NK cell-mediated cytotoxicity. Interacts with PIK3R1 and GRB2. Interacts with CLEC5A. Forms an CLEC5A/TYROBP/HCST trimolecular complex depending almost solely on TYROBP. Interacts with KLRK1. Interacts with CD300H. In terms of processing, phosphorylated; PIK3R1 and GRB2 associate specifically with tyrosine-phosphorylated HCST. Post-translationally, O-glycosylated.

The protein resides in the membrane. Functionally, transmembrane adapter protein which associates with KLRK1 to form an activation receptor KLRK1-HCST in lymphoid and myeloid cells; this receptor plays a major role in triggering cytotoxicity against target cells expressing cell surface ligands such as MHC class I chain-related MICA and MICB, and UL16-binding proteins (ULBPs); these ligands are up-regulated by stress conditions and pathological state such as viral infection and tumor transformation. Functions as a docking site for PI3-kinase PIK3R1 and GRB2. Interaction of ULBPs with KLRK1-HCST triggers calcium mobilization and activation of the PIK3R1, MAP2K/ERK, and JAK2/STAT5 signaling pathways. Both PIK3R1 and GRB2 are required for full KLRK1-HCST-mediated activation and ultimate killing of target cells. In NK cells, KLRK1-HCST signaling directly induces cytotoxicity and enhances cytokine production initiated via DAP12/TYROBP-associated receptors. In T-cells, it provides primarily costimulation for TCR-induced signals. KLRK1-HCST receptor plays a role in immune surveillance against tumors and is required for cytolysis of tumors cells; indeed, melanoma cells that do not express KLRK1 ligands escape from immune surveillance mediated by NK cells. The sequence is that of Hematopoietic cell signal transducer (HCST) from Bos taurus (Bovine).